The chain runs to 128 residues: Crossover junction endodeoxyribonuclease Hjc (128 aa).

Residue Glu-10 participates in Mg(2+) binding. The active site involves Ser-30. Positions 34 and 47 each coordinate Mg(2+).

It belongs to the Holliday junction resolvase Hjc family. In terms of assembly, homodimer. Mg(2+) is required as a cofactor.

It carries out the reaction Endonucleolytic cleavage at a junction such as a reciprocal single-stranded crossover between two homologous DNA duplexes (Holliday junction).. In terms of biological role, a structure-specific endonuclease that resolves Holliday junction (HJ) intermediates during genetic recombination. Cleaves 4-way DNA junctions introducing paired nicks in opposing strands, leaving a 5'-terminal phosphate and a 3'-terminal hydroxyl group that are subsequently ligated to produce recombinant products. The sequence is that of Crossover junction endodeoxyribonuclease Hjc from Thermococcus kodakarensis (strain ATCC BAA-918 / JCM 12380 / KOD1) (Pyrococcus kodakaraensis (strain KOD1)).